Consider the following 575-residue polypeptide: Proline--tRNA ligase (575 aa).

The protein belongs to the class-II aminoacyl-tRNA synthetase family. ProS type 1 subfamily. In terms of assembly, homodimer.

The protein localises to the cytoplasm. The catalysed reaction is tRNA(Pro) + L-proline + ATP = L-prolyl-tRNA(Pro) + AMP + diphosphate. Its function is as follows. Catalyzes the attachment of proline to tRNA(Pro) in a two-step reaction: proline is first activated by ATP to form Pro-AMP and then transferred to the acceptor end of tRNA(Pro). As ProRS can inadvertently accommodate and process non-cognate amino acids such as alanine and cysteine, to avoid such errors it has two additional distinct editing activities against alanine. One activity is designated as 'pretransfer' editing and involves the tRNA(Pro)-independent hydrolysis of activated Ala-AMP. The other activity is designated 'posttransfer' editing and involves deacylation of mischarged Ala-tRNA(Pro). The misacylated Cys-tRNA(Pro) is not edited by ProRS. This is Proline--tRNA ligase from Saccharophagus degradans (strain 2-40 / ATCC 43961 / DSM 17024).